The following is a 137-amino-acid chain: Small ribosomal subunit protein bS18c (137 aa).

It belongs to the bacterial ribosomal protein bS18 family. In terms of assembly, part of the 30S ribosomal subunit.

It is found in the plastid. The protein resides in the chloroplast. This is Small ribosomal subunit protein bS18c (rps18) from Chlamydomonas reinhardtii (Chlamydomonas smithii).